The chain runs to 308 residues: NADH-cytochrome b5 reductase 1 (308 aa).

A helical transmembrane segment spans residues Ile-10–Ile-27. Residues Thr-59–Thr-164 enclose the FAD-binding FR-type domain. Residues Thr-144 to Gly-159 and His-170 to Leu-207 contribute to the FAD site.

The protein belongs to the flavoprotein pyridine nucleotide cytochrome reductase family. In terms of assembly, monomer. Component of the 2-(3-amino-3-carboxypropyl)histidine synthase complex composed of DPH1, DPH2, DPH3 and a NADH-dependent reductase, predominantly CBR1. It depends on FAD as a cofactor.

It localises to the mitochondrion outer membrane. The catalysed reaction is 2 Fe(III)-[cytochrome b5] + NADH = 2 Fe(II)-[cytochrome b5] + NAD(+) + H(+). It carries out the reaction 2 Fe(3+)-[Dph3] + NADH = 2 Fe(2+)-[Dph3] + NAD(+) + H(+). Its pathway is protein modification; peptidyl-diphthamide biosynthesis. Its function is as follows. NADH-dependent reductase for DPH3 and cytochrome b5. Required for the first step of diphthamide biosynthesis, a post-translational modification of histidine which occurs in elongation factor 2. DPH1 and DPH2 transfer a 3-amino-3-carboxypropyl (ACP) group from S-adenosyl-L-methionine (SAM) to a histidine residue, the reaction is assisted by a reduction system comprising DPH3 and a NADH-dependent reductase, predominantly CBR1. By reducing DPH3, also involved in the formation of the tRNA wobble base modification mcm5s 2U (5-methoxycarbonylmethyl-2-thiouridine), mediated by the elongator complex. The cytochrome b5/NADH cytochrome b5 reductase electron transfer system supports the catalytic activity of several sterol biosynthetic enzymes. The chain is NADH-cytochrome b5 reductase 1 (CBR1) from Coccidioides immitis (strain RS) (Valley fever fungus).